A 282-amino-acid chain; its full sequence is Glucuronoxylan 4-O-methyltransferase 1 (282 aa).

A helical membrane pass occupies residues V13–T33.

It belongs to the methyltransferase superfamily. In terms of tissue distribution, expressed in rosette leaves, stems, flowers and siliques.

It is found in the golgi apparatus membrane. It carries out the reaction glucuronoxylan D-glucuronate + n S-adenosyl-L-methionine = glucuronoxylan 4-O-methyl-D-glucuronate + n S-adenosyl-L-homocysteine + n H(+). Functionally, methyltransferase catalyzing 4-O-methylation of glucuronic acid side chains on xylan. The sequence is that of Glucuronoxylan 4-O-methyltransferase 1 (GXM1) from Arabidopsis thaliana (Mouse-ear cress).